The primary structure comprises 88 residues: Small ribosomal subunit protein uS15c (88 aa).

Belongs to the universal ribosomal protein uS15 family. Part of the 30S ribosomal subunit.

Its subcellular location is the plastid. It localises to the chloroplast. The chain is Small ribosomal subunit protein uS15c (rps15) from Barbarea verna (Land cress).